Reading from the N-terminus, the 746-residue chain is Taurocyamine kinase (746 aa).

Approximate repeat units follow at residues M31–V393 and M394–H705. Residues S35–K116 form the Phosphagen kinase N-terminal 1 domain. The Phosphagen kinase C-terminal 1 domain maps to L146 to L382. ATP contacts are provided by residues S149–R153, H212, and R256. C298 is a catalytic residue. ATP-binding positions include R307–H311 and R335–E340. One can recognise a Phosphagen kinase N-terminal 2 domain in the interval P398–G479. The Phosphagen kinase C-terminal 2 domain occupies F509–L746. ATP is bound by residues S512–R516, H575, and R619. The active site involves C661. ATP-binding positions include R670–L674 and R699–E704.

The protein belongs to the ATP:guanido phosphotransferase family. It depends on Mg(2+) as a cofactor.

It catalyses the reaction taurocyamine + ATP = N-phosphotaurocyamine + ADP + H(+). In terms of biological role, this family of enzymes reversibly catalyzes the transfer of phosphate between ATP and various phosphogens (e.g. creatine phosphate). The protein is Taurocyamine kinase of Schistosoma mansoni (Blood fluke).